The primary structure comprises 377 residues: D-alanine--D-alanine ligase (377 aa).

The region spanning 140 to 349 (KELLTVNNIR…NVELVDKLID (210 aa)) is the ATP-grasp domain. Residue 170 to 225 (VKDLGDVVFVKAANQGSSVGVSRAKTADEFEAALTDSFQYDYKVLIEAAVKGPREL) coordinates ATP. The Mg(2+) site is built by Asp303, Glu316, and Asn318.

This sequence belongs to the D-alanine--D-alanine ligase family. The cofactor is Mg(2+). Mn(2+) serves as cofactor.

The protein localises to the cytoplasm. It catalyses the reaction 2 D-alanine + ATP = D-alanyl-D-alanine + ADP + phosphate + H(+). The protein operates within cell wall biogenesis; peptidoglycan biosynthesis. Functionally, cell wall formation. In Leuconostoc citreum (strain KM20), this protein is D-alanine--D-alanine ligase.